The following is a 247-amino-acid chain: Adenosylcobinamide-GDP ribazoletransferase (247 aa).

The next 5 membrane-spanning stretches (helical) occupy residues 34–54, 59–79, 113–133, 138–158, and 194–214; these read IITF…VFMV, CGVP…TGGF, GGLA…ELAL, ILAL…LLMY, and VLLP…AIFI.

It belongs to the CobS family. Mg(2+) is required as a cofactor.

It localises to the cell inner membrane. The enzyme catalyses alpha-ribazole + adenosylcob(III)inamide-GDP = adenosylcob(III)alamin + GMP + H(+). The catalysed reaction is alpha-ribazole 5'-phosphate + adenosylcob(III)inamide-GDP = adenosylcob(III)alamin 5'-phosphate + GMP + H(+). The protein operates within cofactor biosynthesis; adenosylcobalamin biosynthesis; adenosylcobalamin from cob(II)yrinate a,c-diamide: step 7/7. Its function is as follows. Joins adenosylcobinamide-GDP and alpha-ribazole to generate adenosylcobalamin (Ado-cobalamin). Also synthesizes adenosylcobalamin 5'-phosphate from adenosylcobinamide-GDP and alpha-ribazole 5'-phosphate. This is Adenosylcobinamide-GDP ribazoletransferase from Shigella boydii serotype 4 (strain Sb227).